Here is a 182-residue protein sequence, read N- to C-terminus: Adenine phosphoribosyltransferase (182 aa).

It belongs to the purine/pyrimidine phosphoribosyltransferase family. Homodimer.

The protein localises to the cytoplasm. It carries out the reaction AMP + diphosphate = 5-phospho-alpha-D-ribose 1-diphosphate + adenine. The protein operates within purine metabolism; AMP biosynthesis via salvage pathway; AMP from adenine: step 1/1. In terms of biological role, catalyzes a salvage reaction resulting in the formation of AMP, that is energically less costly than de novo synthesis. The sequence is that of Adenine phosphoribosyltransferase from Campylobacter concisus (strain 13826).